The primary structure comprises 4243 residues: MGHLWLLGIWGLCGLLLCAADPSTDGSQIIPKVTEIIPKYGSINGATRLTIRGEGFSQANQFNYGVDNAELGNSVQLISSFQSITCDVEKDASHSTQITCYTRAMPEDSYTVRVSVDGVPVTENNTCKGHINSWECTFNAKSFRTPTIRSITPLSGTPGTLITIQGRIFTDVYGSNIALSSNGKNVRILRVYIGGMPCELLIPQSDNLYGLKLDHPNGDMGSMVCKTTGTFIGHHNVSFILDNDYGRSFPQKMAYFVSSLNKIAMFQTYAEVTMIFPSQGSIRGGTTLTISGRFFDQTDFPVRVLVGGEPCDILNVTENSICCKTPPKPHILKTVYPGGRGLKLEVWNNSRPIRLEEILEYNEKTPGYMGASWVDSASYIWLMEQDTFVARFSGFLVAPDSDVYRFYIKGDDRYAIYFSQTGLPEDKVRIAYHSANANSYFSSPTQRSDDIHLQKGKEYYIEILLQEYRLSAFVDVGLYQYRNVYTEQQTGDAVNEEQVIKSQSTILQEVQVITLENWETTNAINEVQKIKVTSPCVEANSCSLYQYRLIYNMEKTVFLPADASEFILQSALNDLWSIKPDTVQVIRTQNPQSYVYMVTFISTRGDFDLLGYEVVEGNNVTLDITEQTKGKPNLETFTLNWDGIASKPLTLWSSEAEFQGAVEEMVSTKCPPQIANFEEGFVVKYFRDYETDFNLEHINRGQKTAETDAYCGRYSLKNPAVLFDSADVKPNRRPYGDILLFPYNQLCLAYKGFLANYIGLKFQYQDNSKITRSTDTQFTYNFAYGNNWTYTCIDLLDLVRTKYTGTNVSLQRISLHKASESQSFYVDVVYIGHTSTISTLDEMPKRRLPALANKGIFLEHFQVNQTKTNGPTMTNQYSVTMTSYNCSYNIPMMAVSFGQIITHETENEFVYRGNNWPGESKIHIQRIQAASPPLSGSFDIQAYGHILKGLPAAVSAADLQFALQSLEGMGRISVTREGTCAGYAWNIKWRSTCGKQNLLQINDSNIIGEKANMTVTRIKEGGLFRQHVLGDLLRTPSQQPQVEVYVNGIPAKCSGDCGFTWDSNITPLVLAISPSQGSYEEGTILTIVGSGFSPSSAVTVSVGPVGCSLLSVDEKELKCQILNGSAGHAPVAVSMADVGLAQNVGGEEFYFVYQSQISHIWPDSGSIAGGTLLTLSGFGFNENSKVLVGNETCNVIEGDLNRITCRTPKKTEGTVDISVTTNGFQATARDAFSYNCLQTPIITDFSPKVRTILGEVNLTIKGYNFGNELTQNMAVYVGGKTCQILHWNFTDIRCLLPKLSPGKHDIYVEVRNWGFASTRDKLNSSIQYVLEVTSMFPQRGSLFGGTEITIRGFGFSTIPAENTVLLGSIPCNVTSSSENVIKCILHSTGNIFRITNNGKDSVHGLGYAWSPPVLNVSVGDTVAWHWQTHPFLRGIGYRIFSVSSPGSVIYDGKGFTSGRQKSTSGSFSYQFTSPGIHYYSSGYVDEAHSIFLQGVINVLPAETRHIPLHLFVGRSEATYAYGGPENLHLGSSVAGCLATEPLCSLNNTRVKNSKRLLFEVSSCFSPSISNITPSTGTVNELITIIGHGFSNLPWANKVTIGSYPCVVEESSEDSITCHIDPQNSMDVGIRETVTLTVYNLGTAINTLSNEFDRRFVLLPNIDLVLPNAGSTTGMTSVTIKGSGFAVSSAGVKVLMGHFPCKVLSVNYTAIECETSPAAQQLVDVDLLIHGVPAQCQGNCTFSYLESITPYITGVFPNSVIGSVKVLIEGEGLGTVLEDIAVFIGNQQFRAIEVNENNITALVTPLPVGHHSVSVVVGSKGLALGNLTVSSPPVASLSPTSGSIGGGTTLVITGNGFYPGNTTVTIGDEPCQIISINPNEVYCRTPAGTTGMVDVKIFVNTIAYPPLLFTYALEDTPFLRGIIPSRGPPGTEIEITGSNFGFEILEISVMINNIQCNVTMANDSVVQCIVGDHAGGTFPVMMHHKTKGSAMSTVVFEYPLNIQNINPSQGSFGGGQTMTVTGTGFNPQNSIILVCGSECAIDRLRSDYTTLLCEIPSNNGTGAEQACEVSVVNGKDLSQSMTPFTYAVSLTPLITAVSPKRGSTAGGTRLTVVGSGFSENMEDVHITIAEAKCDVEYSNKTHIICMTDAHTLSGWAPVCVHIRGVGMAKLDNADFLYVDAWSSNFSWGGKSPPEEGSLVVITKGQTILLDQSTPILKMLLIQGGTLIFDEADIELQAENILITDGGVLQIGTETSPFQHKAVITLHGHLRSPELPVYGAKTLAVREGILDLHGVPVPVTWTRLAHTAKAGERILILQEAVTWKPGDNIVIASTGHRHSQGENEKMTIASVSADGINITLSNPLNYTHLGITVTLPDGTLFEARAEVGILTRNILIRGSDNVEWNNKIPACPDGFDTGEFATQTCLQGKFGEEIGSDQFGGCVMFHAPVPGANMVTGRIEYVEVFHAGQAFRLGRYPIHWHLLGDLQFKSYVRGCAIHQAYNRAVTIHNTHHLLVERNIIYDIKGGAFFIEDGIEHGNILQYNLAVFVQQSTSLLNDDVTPAAFWVTNPNNTIRHNAVAGGTHFGFWYRMNNHPDGPSYDRNICQKRVPLGEFFNNTVHSQGWFGMWIFEEYFPMQTGSCTSTVPAPAIFNSLTTWNCQKGAEWVNGGALQFHNFVMVNNYEAGIETKRILAPYVGGWGETNGAVIKNAKIVGHLDELGMGSAFCTAKGLVLPFSEGLTVSSVHFMNFDRPNCVALGVTSISGVCNDRCGGWSAKFVDVQYSHTPNKAGFRWEHEMVMIDVDGSLTGHKGHTVIPHSSLLDPSHCTQEAEWSIGFPGSVCDASVSFHRLAFNQPSPVSLLEKDVVLSDSFGTSIIPFQKKRLTHMSGWMALIPNANHINWYFKGVDHITNISYTSTFYGFKEEDYVIISHNFTQNPDMFNIIDMRNGSSNPLNWNTSKNGDWHLEANTSTLYYLVSGRNDLHQSQLISGNLDPDVKDVVINFQAYCCILQDCFPVHPPSRKPIPKKRPATYNLWSNDSFWQSSRENNYTVPHPGANVIIPEGTWIVADIDMPSMERLIIWGVLELEDKYNVGAAESSYREVVLNATYISLQGGRLIGGWEDNPFKGDLKIVLRGNHTTQDWALPEGPNQGAKVLGVFGELDLHGIPHSIYKTKLSETAFAGSKVLSLMDAVDWQEGEEIVITTTSYDFHQTETRSIVKILHDHKILILNDSLSYTHFAEKYHVPGTGESYTLAADVGILSRNIKIVGEDYPGWSEDSFGARVLVGSFTENMMTFKGNARISNVEFYHSGQEGFRDSTDPRYAVTFLNLGQIQEHGSSYIRGCAFHHGFSPAIGVFGTDGLDIDDNIIHFTVGEGIRIWGNANRVRGNLIALSVWPGTYQNRKDLSSTLWHAAIEINRGTNTVLQNNVVAGFGRAGYRIDGEPCPGQFNPVEKWFDNEAHGGLYGIYMNQDGLPGCSLIQGFTIWTCWDYGIYFQTTESVHIYNVTLVDNGMAIFPMIYMPAAISHKISSKNVQIKSSLIVGSSPGFNCSDVLTNDDPNIELTAAHRSPRSPSGGRSGICWPTFASAHNMAPRKPHAGIMSYNAISGLLDISGSTFVGFKNVCSGETNVIFITNPLNEDLQHPIHVKNIKLVDTTEQSKIFIHRPDISKVNPSDCVDMVCDAKRKSFLRDIDGSFLGNAGSVIPQAEYEWDGNSQVGIGDYRIPKAMLTFLNGSRIPVTEKAPHKGIIRDSTCKYLPEWQSYQCFGMEYAMMVIESLDPDTETRRLSPVAIMGNGYVDLINGPQDHGWCAGYTCQRRLSLFHSIVALNKSYEVYFTGTSPQNLRLMLLNVDHNKAVLVGIFFSTLQRLDVYVNNLLVCPKTTIWNAQQKHCELNNHLYKDQFLPNLDSTVLGENYFDGTYQMLYLLVKGTIPVEIHTATVIFVSFQLSVATEDDFYTSHNLVKNLALFLKIPSDKIRISKIRGKSLRRKRSMGFIIEIEIGDPPIQFISNGTTGQMQLSELQEIAGSLGQAVILGNISSILGFNISSMSITNPLPSPSDSGWIKVTAQPVERSAFPVHHVAFVSSLLVITQPVAAQPGQPFPQQPSVKATDSDGNCVSVGITALTLRAILKDSNNNQVNGLSGNTTIPFSSCWANYTDLTPLRTGKNYKIEFILDNVVGVESRTFSLLAESVSSSGSSSSSNSKASTVGTYAQIMTVVISCLVGRMWLLEIFMAAVSTLNITLRSY.

The signal sequence occupies residues 1 to 20; that stretch reads MGHLWLLGIWGLCGLLLCAA. The Extracellular portion of the chain corresponds to 21–4210; that stretch reads DPSTDGSQII…KASTVGTYAQ (4190 aa). IPT/TIG domains follow at residues 31–129, 146–255, and 270–361; these read PKVT…TCKG, PTIR…KMAY, and AEVT…ILEY. Thr-122 is a glycosylation site (O-linked (GalNAc...) threonine). A PA14 domain is found at 337 to 492; sequence PGGRGLKLEV…NVYTEQQTGD (156 aa). Residue Thr-445 is glycosylated (O-linked (GalNAc...) threonine). 11 consecutive IPT/TIG domains span residues 1067-1151, 1155-1234, 1240-1322, 1330-1469, 1566-1649, 1659-1743, 1749-1828, 1831-1910, 1916-1997, 1999-2085, and 2091-2176; these read PLVL…EFYF, SQIS…AFSY, PIIT…RDKL, LEVT…SFSY, PSIS…TLSN, PNID…TFSY, PYIT…NLTV, PPVA…LFTY, PFLR…VFEY, LNIQ…PFTY, and PLIT…DFLY. Thr-1803 and Thr-1839 each carry an O-linked (GalNAc...) threonine glycan. The G8 1 domain maps to 2184 to 2304; sequence FSWGGKSPPE…VPVTWTRLAH (121 aa). Thr-2320 carries an O-linked (GalNAc...) threonine glycan. 4 PbH1 repeats span residues 2508-2530, 2566-2588, 2665-2687, and 2733-2756; these read THHL…FIED, NPNN…WYRM, GGAL…ETKR, and SEGL…ALGV. The region spanning 3036-3174 is the G8 2 domain; the sequence is SFWQSSRENN…HSIYKTKLSE (139 aa). 5 PbH1 repeats span residues 3293-3315, 3355-3377, 3416-3438, 3471-3493, and 3527-3548; these read KGNA…RDST, TDGL…RIWG, GTNT…RIDG, PGCS…YFQT, and SKNV…NCSD. An O-linked (GalNAc...) threonine glycan is attached at Thr-3736. The chain crosses the membrane as a helical span at residues 4211–4231; that stretch reads IMTVVISCLVGRMWLLEIFMA. The Cytoplasmic portion of the chain corresponds to 4232–4243; sequence AVSTLNITLRSY.

It is found in the membrane. The protein resides in the cell projection. It localises to the stereocilium membrane. In terms of biological role, component of hair-cell stereocilia coat. Required for normal hearing. This Homo sapiens (Human) protein is Fibrocystin-L (PKHD1L1).